The following is a 493-amino-acid chain: Probable glycine dehydrogenase (decarboxylating) subunit 2 (493 aa).

An N6-(pyridoxal phosphate)lysine modification is found at Lys-269.

Belongs to the GcvP family. C-terminal subunit subfamily. The glycine cleavage system is composed of four proteins: P, T, L and H. In this organism, the P 'protein' is a heterodimer of two subunits. Requires pyridoxal 5'-phosphate as cofactor.

It catalyses the reaction N(6)-[(R)-lipoyl]-L-lysyl-[glycine-cleavage complex H protein] + glycine + H(+) = N(6)-[(R)-S(8)-aminomethyldihydrolipoyl]-L-lysyl-[glycine-cleavage complex H protein] + CO2. In terms of biological role, the glycine cleavage system catalyzes the degradation of glycine. The P protein binds the alpha-amino group of glycine through its pyridoxal phosphate cofactor; CO(2) is released and the remaining methylamine moiety is then transferred to the lipoamide cofactor of the H protein. This Chloroherpeton thalassium (strain ATCC 35110 / GB-78) protein is Probable glycine dehydrogenase (decarboxylating) subunit 2.